Consider the following 396-residue polypeptide: Elongation factor Tu (396 aa).

In terms of domain architecture, tr-type G spans 10–206 (KPHCNIGTIG…AVDAYIPQPE (197 aa)). A G1 region spans residues 19-26 (GHVDHGKT). 19 to 26 (GHVDHGKT) lines the GTP pocket. Residue threonine 26 participates in Mg(2+) binding. Positions 60-64 (GITIS) are G2. The segment at 81–84 (DCPG) is G3. Residues 81-85 (DCPGH) and 136-139 (NKCD) each bind GTP. The interval 136 to 139 (NKCD) is G4. Residues 174–176 (SAL) are G5.

The protein belongs to the TRAFAC class translation factor GTPase superfamily. Classic translation factor GTPase family. EF-Tu/EF-1A subfamily. Monomer.

The protein resides in the cytoplasm. The catalysed reaction is GTP + H2O = GDP + phosphate + H(+). In terms of biological role, GTP hydrolase that promotes the GTP-dependent binding of aminoacyl-tRNA to the A-site of ribosomes during protein biosynthesis. This is Elongation factor Tu from Nitrobacter winogradskyi (strain ATCC 25391 / DSM 10237 / CIP 104748 / NCIMB 11846 / Nb-255).